Reading from the N-terminus, the 158-residue chain is Transcription elongation factor GreA (158 aa).

Residues 4-75 are a coiled coil; that stretch reads QKQYPMTQEG…QRVENMLRNA (72 aa).

It belongs to the GreA/GreB family.

Necessary for efficient RNA polymerase transcription elongation past template-encoded arresting sites. The arresting sites in DNA have the property of trapping a certain fraction of elongating RNA polymerases that pass through, resulting in locked ternary complexes. Cleavage of the nascent transcript by cleavage factors such as GreA or GreB allows the resumption of elongation from the new 3'terminus. GreA releases sequences of 2 to 3 nucleotides. The sequence is that of Transcription elongation factor GreA from Staphylococcus saprophyticus subsp. saprophyticus (strain ATCC 15305 / DSM 20229 / NCIMB 8711 / NCTC 7292 / S-41).